Here is a 287-residue protein sequence, read N- to C-terminus: uncharacterized protein (287 aa).

Residues 183 to 281 (WEAARYLQEH…GISPIEYRKI (99 aa)) enclose the HTH araC/xylS-type domain. DNA-binding regions (H-T-H motif) lie at residues 200–221 (KDLS…QQVL) and 248–271 (MGVI…KQIE).

This is an uncharacterized protein from Bacillus subtilis (strain 168).